The chain runs to 330 residues: Phosphate acyltransferase (330 aa).

Belongs to the PlsX family. In terms of assembly, homodimer. Probably interacts with PlsY.

The protein resides in the cytoplasm. The enzyme catalyses a fatty acyl-[ACP] + phosphate = an acyl phosphate + holo-[ACP]. The protein operates within lipid metabolism; phospholipid metabolism. Its function is as follows. Catalyzes the reversible formation of acyl-phosphate (acyl-PO(4)) from acyl-[acyl-carrier-protein] (acyl-ACP). This enzyme utilizes acyl-ACP as fatty acyl donor, but not acyl-CoA. The polypeptide is Phosphate acyltransferase (Bacillus anthracis (strain A0248)).